A 148-amino-acid chain; its full sequence is MTQISGKARAAARLAAVQALYQADMEQTPLHLLLDEFHQHRLGAEIEDVEYAKADVAFFDDVVKGVDARRDEIDGLLSARLAKGWALPRLDRTMLQILRAGAYELMARRDVNVGTVITEYVDVAHAFFEEREAKFVNGLLDAVAKDVR.

This sequence belongs to the NusB family.

Its function is as follows. Involved in transcription antitermination. Required for transcription of ribosomal RNA (rRNA) genes. Binds specifically to the boxA antiterminator sequence of the ribosomal RNA (rrn) operons. This Novosphingobium aromaticivorans (strain ATCC 700278 / DSM 12444 / CCUG 56034 / CIP 105152 / NBRC 16084 / F199) protein is Transcription antitermination protein NusB.